Here is a 181-residue protein sequence, read N- to C-terminus: Cyclic AMP-dependent transcription factor ATF-3 (181 aa).

The segment at Val-76–Asn-96 is disordered. Lys-78 is covalently cross-linked (Glycyl lysine isopeptide (Lys-Gly) (interchain with G-Cter in SUMO2)). The bZIP domain occupies Asp-86–His-149. The basic motif stretch occupies residues Arg-88–Lys-110. The leucine-zipper stretch occupies residues Leu-114 to Leu-142. The residue at position 162 (Thr-162) is a Phosphothreonine. Lys-175 participates in a covalent cross-link: Glycyl lysine isopeptide (Lys-Gly) (interchain with G-Cter in SUMO2).

It belongs to the bZIP family. ATF subfamily. ATF3 alone can bind DNA, but it preferentially forms heteromeric complexes with JUN and JUNB and does not interact with FOS. As to expression, expressed in tissues containing skeletal muscle or smooth muscle. Expressed in cutaneous and muscular sensory neurons.

Its subcellular location is the nucleus. In terms of biological role, this protein binds the cAMP response element (CRE) (consensus: 5'-GTGACGT[AC][AG]-3'), a sequence present in many viral and cellular promoters. Represses transcription from promoters with ATF sites. It may repress transcription by stabilizing the binding of inhibitory cofactors at the promoter. The chain is Cyclic AMP-dependent transcription factor ATF-3 (Atf3) from Rattus norvegicus (Rat).